A 304-amino-acid chain; its full sequence is Non-specific ribonucleoside hydrolase RihC (304 aa).

The active site involves H233.

This sequence belongs to the IUNH family. RihC subfamily.

Functionally, hydrolyzes both purine and pyrimidine ribonucleosides with a broad-substrate specificity. This is Non-specific ribonucleoside hydrolase RihC from Escherichia coli (strain SE11).